A 358-amino-acid chain; its full sequence is Cytochrome c peroxidase, mitochondrial (358 aa).

The transit peptide at 1 to 38 (MAASRTATRTLRALRTSTRPALTAAPRAAFRQGGRRLY) directs the protein to the mitochondrion. The active-site Proton acceptor is the histidine 119. The segment at 192-214 (PYRPGRQDRDAAGCTPDGRLPDA) is disordered. Histidine 242 contributes to the heme b binding site. The Tryptophan radical intermediate role is filled by tryptophan 258.

The protein belongs to the peroxidase family. Cytochrome c peroxidase subfamily. In terms of assembly, forms a one-to-one complex with cytochrome c. Heme b serves as cofactor.

The protein localises to the mitochondrion matrix. The protein resides in the mitochondrion intermembrane space. The enzyme catalyses 2 Fe(II)-[cytochrome c] + H2O2 + 2 H(+) = 2 Fe(III)-[cytochrome c] + 2 H2O. In terms of biological role, destroys radicals which are normally produced within the cells and which are toxic to biological systems. The protein is Cytochrome c peroxidase, mitochondrial (ccp-1) of Neurospora crassa (strain ATCC 24698 / 74-OR23-1A / CBS 708.71 / DSM 1257 / FGSC 987).